The chain runs to 457 residues: Asparagine--tRNA ligase (457 aa).

Belongs to the class-II aminoacyl-tRNA synthetase family. In terms of assembly, homodimer.

It localises to the cytoplasm. It catalyses the reaction tRNA(Asn) + L-asparagine + ATP = L-asparaginyl-tRNA(Asn) + AMP + diphosphate + H(+). This is Asparagine--tRNA ligase from Phytoplasma australiense.